A 461-amino-acid chain; its full sequence is Chromosomal replication initiator protein DnaA (461 aa).

Positions 1 to 68 (MINAWAQIEH…EKAAASVLGS (68 aa)) are domain I, interacts with DnaA modulators. The segment at 68–118 (SVPTITVVSGEEPAAAPRPVQVPAQKRPAAARTSGAEQMGLPLHYASRSAD) is domain II. The domain III, AAA+ region stretch occupies residues 119-336 (SIKWMHSFDE…SCLRNLLLKA (218 aa)). ATP-binding residues include G162, G164, K165, and T166. The interval 337-461 (RLLNQQITMD…VERNGRIIHP (125 aa)) is domain IV, binds dsDNA.

It belongs to the DnaA family. As to quaternary structure, oligomerizes as a right-handed, spiral filament on DNA at oriC.

Its subcellular location is the cytoplasm. Plays an essential role in the initiation and regulation of chromosomal replication. ATP-DnaA binds to the origin of replication (oriC) to initiate formation of the DNA replication initiation complex once per cell cycle. Binds the DnaA box (a 9 base pair repeat at the origin) and separates the double-stranded (ds)DNA. Forms a right-handed helical filament on oriC DNA; dsDNA binds to the exterior of the filament while single-stranded (ss)DNA is stabiized in the filament's interior. The ATP-DnaA-oriC complex binds and stabilizes one strand of the AT-rich DNA unwinding element (DUE), permitting loading of DNA polymerase. After initiation quickly degrades to an ADP-DnaA complex that is not apt for DNA replication. Binds acidic phospholipids. This chain is Chromosomal replication initiator protein DnaA, found in Oleidesulfovibrio alaskensis (strain ATCC BAA-1058 / DSM 17464 / G20) (Desulfovibrio alaskensis).